The following is a 140-amino-acid chain: Smith-Magenis syndrome chromosomal region candidate gene 5 protein (140 aa).

The segment at 43-77 (CTGPSSQAPPQPPQASPPAAADHSRTPSLLASSHS) is disordered. Pro residues predominate over residues 49 to 58 (QAPPQPPQAS).

In terms of tissue distribution, widely expressed.

In Homo sapiens (Human), this protein is Smith-Magenis syndrome chromosomal region candidate gene 5 protein (SMCR5).